A 326-amino-acid polypeptide reads, in one-letter code: Beta-ketoacyl-[acyl-carrier-protein] synthase III (326 aa).

Residues C120 and H253 contribute to the active site. Residues 254 to 258 form an ACP-binding region; that stretch reads QANIR. N283 is a catalytic residue.

Belongs to the thiolase-like superfamily. FabH family. As to quaternary structure, homodimer.

It is found in the cytoplasm. It carries out the reaction malonyl-[ACP] + acetyl-CoA + H(+) = 3-oxobutanoyl-[ACP] + CO2 + CoA. The protein operates within lipid metabolism; fatty acid biosynthesis. In terms of biological role, catalyzes the condensation reaction of fatty acid synthesis by the addition to an acyl acceptor of two carbons from malonyl-ACP. Catalyzes the first condensation reaction which initiates fatty acid synthesis and may therefore play a role in governing the total rate of fatty acid production. Possesses both acetoacetyl-ACP synthase and acetyl transacylase activities. Its substrate specificity determines the biosynthesis of branched-chain and/or straight-chain of fatty acids. The polypeptide is Beta-ketoacyl-[acyl-carrier-protein] synthase III (Cupriavidus pinatubonensis (strain JMP 134 / LMG 1197) (Cupriavidus necator (strain JMP 134))).